Here is a 452-residue protein sequence, read N- to C-terminus: La-related protein 1B (452 aa).

Residues 1–22 (MATTASSAANSASRFSIDSSIS) show a composition bias toward low complexity. The disordered stretch occupies residues 1–251 (MATTASSAAN…GFSHRNYSGR (251 aa)). Ala2 is subject to N-acetylalanine. The span at 44–68 (LSLSQDDPFSAPSVSPPTGNNSSDY) shows a compositional bias: polar residues. 4 stretches are compositionally biased toward low complexity: residues 99 to 117 (SWPALSLSARSSSIKSPSL), 136 to 163 (ATSNTSTNANAGSSVSATSSENSAVNNS), 171 to 185 (NNNTSSSSTSSNVSN), and 206 to 223 (SGNFRNSQRNRNSSSYPR). The span at 225–236 (EGLHHGNRRNYE) shows a compositional bias: basic and acidic residues. Positions 237–247 (HGNQSGFSHRN) are enriched in polar residues. An HTH La-type RNA-binding domain is found at 328–417 (RNFDAILYNK…RGDWDKYLLP (90 aa)). A disordered region spans residues 419–452 (EPSRSGPAAGASNNASLVSQIESMTLSERSREGV). A compositionally biased stretch (low complexity) spans 422–434 (RSGPAAGASNNAS). The span at 435 to 445 (LVSQIESMTLS) shows a compositional bias: polar residues.

This sequence belongs to the LARP family.

The protein localises to the cytoplasm. Its function is as follows. Promotes leaf senescence. In Arabidopsis thaliana (Mouse-ear cress), this protein is La-related protein 1B (LARP1B).